Consider the following 446-residue polypeptide: Chromosomal replication initiator protein DnaA (446 aa).

Residues 1 to 81 form a domain I, interacts with DnaA modulators region; sequence MENISDLWNS…AKLAIRFIIP (81 aa). The segment at 81–109 is domain II; it reads PQSQAEEDIDLPSVKQKHAHDESNHLPQS. Positions 110 to 326 are domain III, AAA+ region; the sequence is MLNPKYTFDT…GALIRVVAYS (217 aa). ATP is bound by residues G154, G156, K157, and T158. Positions 327–446 are domain IV, binds dsDNA; it reads SLINKDMNAD…HVEEVKDILK (120 aa).

This sequence belongs to the DnaA family. As to quaternary structure, oligomerizes as a right-handed, spiral filament on DNA at oriC.

It is found in the cytoplasm. In terms of biological role, plays an essential role in the initiation and regulation of chromosomal replication. ATP-DnaA binds to the origin of replication (oriC) to initiate formation of the DNA replication initiation complex once per cell cycle. Binds the DnaA box (a 9 base pair repeat at the origin) and separates the double-stranded (ds)DNA. Forms a right-handed helical filament on oriC DNA; dsDNA binds to the exterior of the filament while single-stranded (ss)DNA is stabiized in the filament's interior. The ATP-DnaA-oriC complex binds and stabilizes one strand of the AT-rich DNA unwinding element (DUE), permitting loading of DNA polymerase. After initiation quickly degrades to an ADP-DnaA complex that is not apt for DNA replication. Binds acidic phospholipids. This is Chromosomal replication initiator protein DnaA from Bacillus mycoides (strain KBAB4) (Bacillus weihenstephanensis).